Reading from the N-terminus, the 887-residue chain is Exocyst complex component SEC3A (887 aa).

Coiled-coil stretches lie at residues 221–248 (IGEA…AILE) and 281–301 (LRHM…LEMQ). A disordered region spans residues 542–581 (GAGNDKKSQSNNDDGNDDDDLGIMDIDETDKKPGKNSPDL). Residues 555–569 (DGNDDDDLGIMDIDE) are compositionally biased toward acidic residues.

This sequence belongs to the SEC3 family. The exocyst complex is composed of SEC3, SEC5, SEC6, SEC8, SEC10, EXO70A1 and EXO84B. Interacts with EXO70A1, SEC5A and ICR1, but not with ICR2. Binds to EXO70H1. Binds directly to B1L. In terms of tissue distribution, widely expressed. Preferentially expressed in tissues containing dividing and expanding cells, such as the shoot apical meristem, root tip, lateral root primordia and developing embryos.

The protein resides in the cytoplasm. Its subcellular location is the cytosol. It is found in the cell membrane. The protein localises to the cytoskeleton. It localises to the phragmoplast. The protein resides in the secreted. Its subcellular location is the extracellular exosome. Functionally, component of the exocyst complex involved in the docking of exocytic vesicles with fusion sites on the plasma membrane during regulated or polarized secretion. Involved in polarized cell growth and organ morphogenesis. During cytokinesis, involved in cell plate initiation, cell plate maturation and formation of new primary cell wall. During cytokinesis, involved in cell plate initiation, cell plate maturation and formation of new primary cell wall. This chain is Exocyst complex component SEC3A, found in Arabidopsis thaliana (Mouse-ear cress).